The sequence spans 334 residues: Nucleoid-associated protein Pfl01_0983 (334 aa).

Belongs to the YejK family.

Its subcellular location is the cytoplasm. It is found in the nucleoid. The sequence is that of Nucleoid-associated protein Pfl01_0983 from Pseudomonas fluorescens (strain Pf0-1).